A 591-amino-acid polypeptide reads, in one-letter code: MSNYSVSLVGPAPWGFRLQGGKDFNMPLTISSLKDGGKASQAHVRIGDVVLSIDGISAQGMTHLEAQNKIKACTGSLNMTLQRASAAAKSEPVSVQKGEPKEVVKPVPITSPAVSKVTSTTNMAYNKAPRPFGSVSSPKVTSIPSPSSAFTPAHAATSSHASPTPVAAATPLHLSASGLHVSANLSADQCSSPPNTGKPAVNVPRQPTVTSVCSESAQELAEGQRRGSQGDIKQQNGPPRKHIVERNTEFYHIPTHSDASKKRLIEDTEDWRPRTGTTQSRSFRILAQITGTEHLTESENDNTKKANSTQEPSQQPASSGASPLSASEGPESPGSSRPSVAGLRSAAAFKPVGSTSVKSPSWQRPNQAAPSTGRISNNARSSGTGASVGPPQPSDQDTLVQRAEHIPAGKRTPMCAHCNQVIRGPFLVALGKSWHPEEFNCAHCKNTMAYIGFVEEKGALYCELCYEKFFAPECGRCQRKILGEVINALKQTWHVSCFVCVACGKPIRNNVFHLEDGEPYCETDYYALFGTICRGCEFPIEAGDMFLEALGYTWHDTCFVCSVCCESLEGQTFFSKKDKPLCKKHAHSVNF.

Ser2 bears the N-acetylserine mark. Residue Ser2 is modified to Phosphoserine. A PDZ domain is found at 2–85; the sequence is SNYSVSLVGP…SLNMTLQRAS (84 aa). Lys89 carries the post-translational modification N6-acetyllysine; alternate. Lys89 carries the post-translational modification N6-succinyllysine; alternate. Lys89 is covalently cross-linked (Glycyl lysine isopeptide (Lys-Gly) (interchain with G-Cter in SUMO2); alternate). 5 positions are modified to phosphoserine: Glu102, Lys105, Ser111, Ser134, and Ser137. Disordered regions lie at residues 121–166 and 186–398; these read TNMA…PTPV and SADQ…DQDT. A compositionally biased stretch (polar residues) spans 134–143; sequence SVSSPKVTSI. Over residues 144–166 the composition is skewed to low complexity; that stretch reads PSPSSAFTPAHAATSSHASPTPV. 2 stretches are compositionally biased toward polar residues: residues 186–195 and 205–217; these read SADQCSSPPN and RQPT…SESA. Phosphoserine occurs at positions 218, 228, and 260. Composition is skewed to basic and acidic residues over residues 258-273 and 294-304; these read DASK…DWRP and HLTESENDNTK. The span at 310–339 shows a compositional bias: low complexity; sequence QEPSQQPASSGASPLSASEGPESPGSSRPS. Phosphoserine is present on residues Ser313, Pro316, and Ser322. N6-acetyllysine is present on Lys350. Over residues 353 to 385 the composition is skewed to polar residues; it reads GSTSVKSPSWQRPNQAAPSTGRISNNARSSGTG. Ser359 and Ser361 each carry phosphoserine. LIM zinc-binding domains are found at residues 413 to 472, 472 to 531, and 531 to 591; these read PMCA…FFAP, PECG…LFGT, and TICR…SVNF.

Interacts with various PKC isoforms through the LIM domains. Interacts with actin and alpha-actinin through the PDZ domain. Interacts (via LIM domains) with SIPA1L1/SPAR; this interaction may occur preferentially with isoform 1.

Its subcellular location is the postsynaptic density. It localises to the presynapse. It is found in the postsynapse. The protein localises to the cytoplasm. The protein resides in the cytosol. Functionally, may play an important role in the heart development by scaffolding PKC to the Z-disk region. May play a role in the regulation of cardiomyocyte expansion. Isoforms lacking the LIM domains may negatively modulate the scaffolding activity of isoform 1. Overexpression promotes the development of heart hypertrophy. Contributes to the regulation of dendritic spine morphogenesis in neurons. May be required to restrain postsynaptic growth of excitatory synapses. Isoform 1, but not isoform 2, expression favors spine thinning and elongation. This is PDZ and LIM domain protein 5 from Mus musculus (Mouse).